Here is a 467-residue protein sequence, read N- to C-terminus: Probable glycerol-3-phosphate dehydrogenase [NAD(+)] 2, cytosolic (467 aa).

NAD(+) is bound by residues 47 to 52 (GAGAWG), Lys-195, and Ala-234. Lys-195 lines the substrate pocket. Lys-284 acts as the Proton acceptor in catalysis. NAD(+)-binding residues include Arg-346 and Gln-374. Residue 346–347 (RN) participates in substrate binding.

Belongs to the NAD-dependent glycerol-3-phosphate dehydrogenase family.

It is found in the cytoplasm. The protein resides in the cytosol. The catalysed reaction is sn-glycerol 3-phosphate + NAD(+) = dihydroxyacetone phosphate + NADH + H(+). Functionally, may be involved in cell redox homeostasis. The protein is Probable glycerol-3-phosphate dehydrogenase [NAD(+)] 2, cytosolic of Oryza sativa subsp. japonica (Rice).